The following is a 540-amino-acid chain: Probable ATP-dependent RNA helicase DDX28 (540 aa).

Residues 3–18 carry the Mitochondrial targeting signal motif; that stretch reads LTRPVRLFSLVTRLLL. The Q motif signature appears at 126 to 156; the sequence is GSFADLGLEPRVLHALQEAAPEVVQPTTVQS. Residues 159 to 351 enclose the Helicase ATP-binding domain; it reads IPSLLRGRHV…NKVASPDAVT (193 aa). 172–179 provides a ligand contact to ATP; that stretch reads AETGSGKT. Residues 180 to 191 carry the Nuclear export signal motif; sequence LSYLLPLLQRLL. Residues 286-289 carry the DEAD motif; the sequence is DEAD. Positions 377–536 constitute a Helicase C-terminal domain; that stretch reads KVAELVHILK…GLASSVKEPL (160 aa). Positions 520 to 523 match the Nuclear localization signal motif; that stretch reads RRRR.

It belongs to the DEAD box helicase family. Monomer. Found in a complex with GRSF1, DHX30, FASTKD2 and FASTKD5. Associates with the 16S mitochondrial rRNA (16S mt-rRNA) and with the mitochondrial ribosome large subunit (39S). Expressed in all tissues tested, including brain, placenta, lung, liver, skeletal muscle, kidney, pancreas, leukocytes, colon, small intestine, ovary and prostate.

The protein resides in the nucleus. Its subcellular location is the mitochondrion. It localises to the mitochondrion matrix. It is found in the mitochondrion nucleoid. The enzyme catalyses ATP + H2O = ADP + phosphate + H(+). Its function is as follows. Plays an essential role in facilitating the proper assembly of the mitochondrial large ribosomal subunit and its helicase activity is essential for this function. May be involved in RNA processing or transport. Has RNA and Mg(2+)-dependent ATPase activity. The polypeptide is Probable ATP-dependent RNA helicase DDX28 (DDX28) (Homo sapiens (Human)).